The following is a 479-amino-acid chain: UDP-N-acetylmuramate--L-alanine ligase (479 aa).

Residue 126–132 (GTHGKTT) coordinates ATP.

Belongs to the MurCDEF family.

It localises to the cytoplasm. The enzyme catalyses UDP-N-acetyl-alpha-D-muramate + L-alanine + ATP = UDP-N-acetyl-alpha-D-muramoyl-L-alanine + ADP + phosphate + H(+). It functions in the pathway cell wall biogenesis; peptidoglycan biosynthesis. In terms of biological role, cell wall formation. This chain is UDP-N-acetylmuramate--L-alanine ligase, found in Alkalilimnicola ehrlichii (strain ATCC BAA-1101 / DSM 17681 / MLHE-1).